The chain runs to 266 residues: Large ribosomal subunit protein uL3 (266 aa).

Positions 124-149 (NQKIGPKSHGGGGGSKPVRQTGSLGD) are disordered.

Belongs to the universal ribosomal protein uL3 family. Part of the 50S ribosomal subunit. Forms a cluster with proteins L14 and L19.

In terms of biological role, one of the primary rRNA binding proteins, it binds directly near the 3'-end of the 23S rRNA, where it nucleates assembly of the 50S subunit. The sequence is that of Large ribosomal subunit protein uL3 from Mycoplasmopsis pulmonis (strain UAB CTIP) (Mycoplasma pulmonis).